The sequence spans 180 residues: Formate hydrogenlyase subunit 6 (180 aa).

2 consecutive 4Fe-4S ferredoxin-type domains span residues 31-60 (GKPEQNPQQCIGCAACVNACPSNALTVETD) and 66-95 (LAWEFNLGHCIFCGRCEEVCPTAAIKLSQE). 8 residues coordinate [4Fe-4S] cluster: C40, C43, C46, C50, C75, C78, C81, and C85.

In terms of assembly, FHL comprises of a formate dehydrogenase, unidentified electron carriers and a hydrogenase (isoenzyme 3). In this non-energy conserving pathway, molecular hydrogen and carbodioxide are released from formate.

In terms of biological role, probable electron transfer protein for hydrogenase 3. In Escherichia coli (strain K12), this protein is Formate hydrogenlyase subunit 6 (hycF).